The following is a 112-amino-acid chain: Cortistatin (112 aa).

Positions 1-27 are cleaved as a signal peptide; sequence MGGCSTRGKRPSALSLLLLLLLSGIAA. Residues 28-81 constitute a propeptide that is removed on maturation; the sequence is SALPLESGPTGQDSVQDATGGRRTGLLTFLAWWHEWASQDSSSTAFEGGTPELS. The segment at 66–101 is disordered; that stretch reads QDSSSTAFEGGTPELSKRQERPPLQQPPHRDKKPCK. Cys-100 and Cys-111 are joined by a disulfide.

The protein belongs to the somatostatin family. In terms of tissue distribution, interneurons in the cerebral cortex and hippocampus.

It localises to the secreted. Functionally, neuropeptide with neuronal depressant and sleep-modulating properties. The polypeptide is Cortistatin (Cort) (Rattus norvegicus (Rat)).